We begin with the raw amino-acid sequence, 463 residues long: Senescence/dehydration-associated protein At3g51250 (463 aa).

Positions 1-12 are enriched in basic and acidic residues; it reads MNPSHGGDDKQR. 3 disordered regions span residues 1–31, 52–74, and 146–172; these read MNPS…FAST, PNLF…PQAT, and IHPP…KSKS. A compositionally biased stretch (polar residues) spans 19 to 31; the sequence is VDQSIPDNPFAST. The Senescence domain occupies 269-437; sequence IASGSGKLIR…AWVAFKIRKA (169 aa).

The protein is Senescence/dehydration-associated protein At3g51250 of Arabidopsis thaliana (Mouse-ear cress).